A 138-amino-acid polypeptide reads, in one-letter code: ATP synthase epsilon chain (138 aa).

Belongs to the ATPase epsilon chain family. F-type ATPases have 2 components, CF(1) - the catalytic core - and CF(0) - the membrane proton channel. CF(1) has five subunits: alpha(3), beta(3), gamma(1), delta(1), epsilon(1). CF(0) has three main subunits: a, b and c.

It is found in the cell inner membrane. Produces ATP from ADP in the presence of a proton gradient across the membrane. This Geotalea daltonii (strain DSM 22248 / JCM 15807 / FRC-32) (Geobacter daltonii) protein is ATP synthase epsilon chain.